Reading from the N-terminus, the 171-residue chain is Ribosome maturation factor RimM (171 aa).

A PRC barrel domain is found at 96 to 168 (EDGFYDHELE…TATITPPEGL (73 aa)).

Belongs to the RimM family. In terms of assembly, binds ribosomal protein uS19.

It is found in the cytoplasm. An accessory protein needed during the final step in the assembly of 30S ribosomal subunit, possibly for assembly of the head region. Essential for efficient processing of 16S rRNA. May be needed both before and after RbfA during the maturation of 16S rRNA. It has affinity for free ribosomal 30S subunits but not for 70S ribosomes. The sequence is that of Ribosome maturation factor RimM from Corynebacterium glutamicum (strain ATCC 13032 / DSM 20300 / JCM 1318 / BCRC 11384 / CCUG 27702 / LMG 3730 / NBRC 12168 / NCIMB 10025 / NRRL B-2784 / 534).